Reading from the N-terminus, the 203-residue chain is MPGRTRRDGGSESGGKDRRDRRDGGRGGAAQEKTPQFERVVTINRVAKVVKGGRRFSFTALVVVGDGDGMVGVGYGKAKEVPAAIAKGVEEAKKNFFRVPRLGGTITHPVQGEDAAGVVLLRPASAGTGVIAGGPVRAVLECAGVHDVLSKSLGSDNPINIVHATVAALKQLQRPEEVAARRGLPLEDVAPAFMLRARAGQGA.

Basic and acidic residues predominate over residues 1 to 25 (MPGRTRRDGGSESGGKDRRDRRDGG). Residues 1–36 (MPGRTRRDGGSESGGKDRRDRRDGGRGGAAQEKTPQ) are disordered. Residues 36–99 (QFERVVTINR…EEAKKNFFRV (64 aa)) enclose the S5 DRBM domain.

This sequence belongs to the universal ribosomal protein uS5 family. In terms of assembly, part of the 30S ribosomal subunit. Contacts proteins S4 and S8.

Its function is as follows. With S4 and S12 plays an important role in translational accuracy. Functionally, located at the back of the 30S subunit body where it stabilizes the conformation of the head with respect to the body. This Saccharopolyspora erythraea (strain ATCC 11635 / DSM 40517 / JCM 4748 / NBRC 13426 / NCIMB 8594 / NRRL 2338) protein is Small ribosomal subunit protein uS5.